Consider the following 355-residue polypeptide: Gibberellin 3-beta-dioxygenase 4 (355 aa).

The Fe2OG dioxygenase domain maps to 203 to 303 (GRGAIRLNHY…RISIAYLWGG (101 aa)). Fe cation contacts are provided by histidine 227, aspartate 229, and histidine 284. Arginine 294 is an active-site residue.

Belongs to the iron/ascorbate-dependent oxidoreductase family. GA3OX subfamily. L-ascorbate is required as a cofactor. Fe cation serves as cofactor. Expressed in siliques and in seeds, specifically at the rim of the embryo and the outer integument. Also expressed in flowers. Not detected in roots, stems and leaves.

It carries out the reaction gibberellin A20 + 2-oxoglutarate + O2 = gibberellin A1 + succinate + CO2. The protein operates within plant hormone biosynthesis; gibberellin biosynthesis. Functionally, converts the inactive gibberellin (GA) precursors GA9 and GA20 in the bioactives gibberellins GA4 and GA1. Involved in the production of bioactive GA for reproductive development. The chain is Gibberellin 3-beta-dioxygenase 4 from Arabidopsis thaliana (Mouse-ear cress).